The sequence spans 326 residues: DNA-directed RNA polymerase subunit alpha (326 aa).

The segment at 1–231 (MQSNSLLKPR…DQLSVFADLE (231 aa)) is alpha N-terminal domain (alpha-NTD). The alpha C-terminal domain (alpha-CTD) stretch occupies residues 245-326 (IDPVLLRPVD…WPPAGLEKLG (82 aa)).

This sequence belongs to the RNA polymerase alpha chain family. Homodimer. The RNAP catalytic core consists of 2 alpha, 1 beta, 1 beta' and 1 omega subunit. When a sigma factor is associated with the core the holoenzyme is formed, which can initiate transcription.

It catalyses the reaction RNA(n) + a ribonucleoside 5'-triphosphate = RNA(n+1) + diphosphate. In terms of biological role, DNA-dependent RNA polymerase catalyzes the transcription of DNA into RNA using the four ribonucleoside triphosphates as substrates. In Aromatoleum aromaticum (strain DSM 19018 / LMG 30748 / EbN1) (Azoarcus sp. (strain EbN1)), this protein is DNA-directed RNA polymerase subunit alpha.